The chain runs to 985 residues: Translation initiation factor IF-2 (985 aa).

3 stretches are compositionally biased toward basic and acidic residues: residues 49 to 58 (QYGKKQEKSS), 65 to 89 (IQRE…RPDN), and 99 to 113 (VPNR…DKAK). Residues 49–401 (QYGKKQEKSS…QQSAPPPILD (353 aa)) form a disordered region. Polar residues predominate over residues 125–136 (SKTTTNSENEQT). The span at 137 to 162 (APRQGSAQQSGQGRPQANRPQGSQGR) shows a compositional bias: low complexity. 2 stretches are compositionally biased toward gly residues: residues 180-246 (PQGG…GQGR) and 288-324 (PQGG…GAGR). The span at 349 to 377 (KAPDKTKGDRRKNYEKDGKWADGQIEKNK) shows a compositional bias: basic and acidic residues. The segment covering 378–391 (LFKGRNNKNKKRQH) has biased composition (basic residues). Residues 485–654 (LRPPVVTIMG…LLVAEVHELK (170 aa)) enclose the tr-type G domain. The tract at residues 494–501 (GHVDHGKT) is G1. 494 to 501 (GHVDHGKT) serves as a coordination point for GTP. The segment at 519–523 (GITQH) is G2. The interval 540–543 (DTPG) is G3. Residues 540–544 (DTPGH) and 594–597 (NKMD) each bind GTP. The segment at 594-597 (NKMD) is G4. Residues 630–632 (SAK) form a G5 region.

It belongs to the TRAFAC class translation factor GTPase superfamily. Classic translation factor GTPase family. IF-2 subfamily.

It is found in the cytoplasm. One of the essential components for the initiation of protein synthesis. Protects formylmethionyl-tRNA from spontaneous hydrolysis and promotes its binding to the 30S ribosomal subunits. Also involved in the hydrolysis of GTP during the formation of the 70S ribosomal complex. This Desulforamulus reducens (strain ATCC BAA-1160 / DSM 100696 / MI-1) (Desulfotomaculum reducens) protein is Translation initiation factor IF-2.